Consider the following 408-residue polypeptide: Succinylornithine transaminase (408 aa).

Lysine 252 bears the N6-(pyridoxal phosphate)lysine mark.

This sequence belongs to the class-III pyridoxal-phosphate-dependent aminotransferase family. AstC subfamily. Requires pyridoxal 5'-phosphate as cofactor.

It carries out the reaction N(2)-succinyl-L-ornithine + 2-oxoglutarate = N-succinyl-L-glutamate 5-semialdehyde + L-glutamate. It participates in amino-acid degradation; L-arginine degradation via AST pathway; L-glutamate and succinate from L-arginine: step 3/5. In terms of biological role, catalyzes the transamination of N(2)-succinylornithine and alpha-ketoglutarate into N(2)-succinylglutamate semialdehyde and glutamate. Can also act as an acetylornithine aminotransferase. This chain is Succinylornithine transaminase, found in Salmonella agona (strain SL483).